Here is a 227-residue protein sequence, read N- to C-terminus: LexA repressor (227 aa).

Residues 26–46 constitute a DNA-binding region (H-T-H motif); that stretch reads FDEMKEALDLASKSGIHRLIT. Residues S147 and K185 each act as for autocatalytic cleavage activity in the active site.

This sequence belongs to the peptidase S24 family. In terms of assembly, homodimer.

It catalyses the reaction Hydrolysis of Ala-|-Gly bond in repressor LexA.. Its function is as follows. Represses a number of genes involved in the response to DNA damage (SOS response), including recA and lexA. In the presence of single-stranded DNA, RecA interacts with LexA causing an autocatalytic cleavage which disrupts the DNA-binding part of LexA, leading to derepression of the SOS regulon and eventually DNA repair. The polypeptide is LexA repressor (Hyphomonas neptunium (strain ATCC 15444)).